Reading from the N-terminus, the 266-residue chain is Eukaryotic translation initiation factor 3 subunit J (266 aa).

2 disordered regions span residues 1–142 and 215–243; these read MAPS…VSDS and MSNEKMREERAADKGNKKSKAAKTKVSLV. The span at 26-44 shows a compositional bias: acidic residues; that stretch reads DEEEEDVLDSWDAAEDSEV. The stretch at 40 to 99 forms a coiled coil; sequence EDSEVEREKAAKAAEAKAKAEAEAAAKKKSKAQRIQEHKEERKKREEEDSSSESEEDEAE. 2 stretches are compositionally biased toward basic and acidic residues: residues 45-65 and 73-86; these read EREKAAKAAEAKAKAEAEAAA and RIQEHKEERKKREE. The segment covering 87–97 has biased composition (acidic residues); the sequence is EDSSSESEEDE. Composition is skewed to basic and acidic residues over residues 98-118 and 218-230; these read AERRARLRRTEKDSDLKHAED and EKMREERAADKGN.

This sequence belongs to the eIF-3 subunit J family. Component of the eukaryotic translation initiation factor 3 (eIF-3) complex.

The protein resides in the cytoplasm. In terms of biological role, component of the eukaryotic translation initiation factor 3 (eIF-3) complex, which is involved in protein synthesis of a specialized repertoire of mRNAs and, together with other initiation factors, stimulates binding of mRNA and methionyl-tRNAi to the 40S ribosome. The eIF-3 complex specifically targets and initiates translation of a subset of mRNAs involved in cell proliferation. This is Eukaryotic translation initiation factor 3 subunit J (hcr1) from Aspergillus terreus (strain NIH 2624 / FGSC A1156).